The chain runs to 77 residues: U8-lycotoxin-Ls1r (77 aa).

The N-terminal stretch at 1–20 (MKLIIFTGLVLFAIVSLIEA) is a signal peptide. A propeptide spanning residues 21–26 (QAENEK) is cleaved from the precursor.

Belongs to the neurotoxin 19 (CSTX) family. 08 (U8-Lctx) subfamily. Post-translationally, contains 4 disulfide bonds. As to expression, expressed by the venom gland.

The protein localises to the secreted. This Lycosa singoriensis (Wolf spider) protein is U8-lycotoxin-Ls1r.